The chain runs to 190 residues: MRGIGRYHAPVDGHAALDRAIRKRIDFPKKGILYYDITGVLMNAAVFRYCLDQMVEFYRDEHVTAVAAIESRGFIFAAPFADRMGIPLILVRKAGKLPGDTYSCSYSLEYGKATVEVHKSDVVAGARVLLTDDLIATGGTLNAARTMLRAGGAEVVGFFAVVGLPFLRYHELIGDLPVRTLIEYNQETSN.

This sequence belongs to the purine/pyrimidine phosphoribosyltransferase family. In terms of assembly, homodimer.

Its subcellular location is the cytoplasm. The catalysed reaction is AMP + diphosphate = 5-phospho-alpha-D-ribose 1-diphosphate + adenine. The protein operates within purine metabolism; AMP biosynthesis via salvage pathway; AMP from adenine: step 1/1. Catalyzes a salvage reaction resulting in the formation of AMP, that is energically less costly than de novo synthesis. This chain is Adenine phosphoribosyltransferase, found in Treponema pallidum (strain Nichols).